A 199-amino-acid polypeptide reads, in one-letter code: Large ribosomal subunit protein bL25 (199 aa).

Belongs to the bacterial ribosomal protein bL25 family. CTC subfamily. Part of the 50S ribosomal subunit; part of the 5S rRNA/L5/L18/L25 subcomplex. Contacts the 5S rRNA. Binds to the 5S rRNA independently of L5 and L18.

Its function is as follows. This is one of the proteins that binds to the 5S RNA in the ribosome where it forms part of the central protuberance. This is Large ribosomal subunit protein bL25 from Chloroherpeton thalassium (strain ATCC 35110 / GB-78).